Reading from the N-terminus, the 89-residue chain is Small ribosomal subunit protein uS14 (89 aa).

The protein belongs to the universal ribosomal protein uS14 family. Part of the 30S ribosomal subunit. Contacts proteins S3 and S10.

In terms of biological role, binds 16S rRNA, required for the assembly of 30S particles and may also be responsible for determining the conformation of the 16S rRNA at the A site. This chain is Small ribosomal subunit protein uS14, found in Chlorobium phaeovibrioides (strain DSM 265 / 1930) (Prosthecochloris vibrioformis (strain DSM 265)).